Consider the following 589-residue polypeptide: Cysteine/serine-rich nuclear protein 1 (589 aa).

2 disordered regions span residues 1 to 62 (MTGL…RDFC) and 309 to 388 (FREL…GVDD). Composition is skewed to low complexity over residues 17 to 41 (SSVSSSSSSSGCQSRSCSPSSSVSR) and 345 to 368 (DNSCSSDMTDSSTASSSASGTSEA).

This sequence belongs to the AXUD1 family. Ubiquitous. Most abundantly expressed in lung, placenta, skeletal muscle, pancreas and leukocyte. Frequently down-regulated in lung, kidney, liver and colon cancers compared with their corresponding normal tissues.

The protein resides in the nucleus. In terms of biological role, binds to the consensus sequence 5'-AGAGTG-3' and has transcriptional activator activity. May have a tumor-suppressor function. May play a role in apoptosis. The polypeptide is Cysteine/serine-rich nuclear protein 1 (CSRNP1) (Homo sapiens (Human)).